We begin with the raw amino-acid sequence, 64 residues long: Putative neurotoxin-H (64 aa).

An N-terminal signal peptide occupies residues 1-19; that stretch reads MYATVTVTVLLLISSGIFC. 3 cysteine pairs are disulfide-bonded: Cys25-Cys45, Cys32-Cys54, and Cys36-Cys56.

As to expression, expressed by the venom gland.

It localises to the secreted. This is Putative neurotoxin-H from Lychas mucronatus (Chinese swimming scorpion).